A 690-amino-acid polypeptide reads, in one-letter code: F-box/LRR-repeat protein 5 (690 aa).

The tract at residues 1–159 (MAPFPDEVDV…IKKKVIAQHC (159 aa)) is hemerythrin-like. Histidine 15, histidine 57, glutamate 58, glutamate 61, histidine 80, histidine 126, and glutamate 130 together coordinate Fe(3+). Residues 202–248 (STGITHLPPEVMLSIFSYLNPQELCRCSQVSTKWSQLAKTGSLWKHL) enclose the F-box domain. LRR repeat units lie at residues 340–364 (SSAV…LDLT), 365–392 (QTDI…DLSG), 393–418 (CEKI…QSGF), 478–507 (VWML…CVME), 575–606 (TTLP…SLSG), 607–634 (CYQI…NLSG), and 635–660 (CLTV…YFYY). Residues cysteine 661, cysteine 675, cysteine 685, and cysteine 686 each contribute to the [2Fe-2S] cluster site.

In terms of assembly, part of a SCF (SKP1-cullin-F-box) protein ligase complex. Interacts with ACO1/IRP1, IREB2/IRP2; the interaction depends on the [2Fe-2S] cluster. Interacts with DCTN1/p150-glued. It depends on [2Fe-2S] cluster as a cofactor. In terms of processing, polybiquitinated upon iron and oxygen depletion, leading to its degradation by the proteasome. Ubiquitination is regulated by the hemerythrin-like region that acts as an oxygen and iron sensor. Undergoes constitutive ubiquitin-dependent degradation at the steady state by HERC2. As to expression, ubiquitously expressed. Highly expressed in early embryogenesis with expression decreasing as the embryo progresses through development (E11 and E15).

The protein resides in the cytoplasm. It localises to the perinuclear region. It is found in the nucleus. The protein operates within protein modification; protein ubiquitination. Its activity is regulated as follows. An iron-sulfur cluster promotes IRP2 polyubiquitination and degradation in response to both iron and oxygen concentrations. In terms of biological role, component of some SCF (SKP1-cullin-F-box) protein ligase complex that plays a central role in iron homeostasis by promoting the ubiquitination and subsequent degradation of IREB2/IRP2. The C-terminal domain of FBXL5 contains a redox-sensitive [2Fe-2S] cluster that, upon oxidation, promotes binding to IRP2 to effect its oxygen-dependent degradation. Under iron deficiency conditions, the N-terminal hemerythrin-like (Hr) region, which contains a diiron metal center, cannot bind iron and undergoes conformational changes that destabilize the FBXL5 protein and cause its ubiquitination and degradation. When intracellular iron levels start rising, the Hr region is stabilized. Additional increases in iron levels facilitate the assembly and incorporation of a redox active [2Fe-2S] cluster in the C-terminal domain. Only when oxygen level is high enough to maintain the cluster in its oxidized state can FBXL5 recruit IRP2 as a substrate for polyubiquination and degradation. Promotes ubiquitination and subsequent degradation of the dynactin complex component DCTN1. Within the nucleus, promotes the ubiquitination of SNAI1; preventing its interaction with DNA and promoting its degradation. Negatively regulates DNA damage response by mediating the ubiquitin-proteasome degradation of the DNA repair protein NABP2. The chain is F-box/LRR-repeat protein 5 (Fbxl5) from Mus musculus (Mouse).